The following is a 212-amino-acid chain: Methylthioribulose-1-phosphate dehydratase (212 aa).

The Zn(2+) site is built by H97 and H99.

It belongs to the aldolase class II family. MtnB subfamily. As to quaternary structure, homotetramer. It depends on Zn(2+) as a cofactor.

It carries out the reaction 5-(methylsulfanyl)-D-ribulose 1-phosphate = 5-methylsulfanyl-2,3-dioxopentyl phosphate + H2O. Its pathway is amino-acid biosynthesis; L-methionine biosynthesis via salvage pathway; L-methionine from S-methyl-5-thio-alpha-D-ribose 1-phosphate: step 2/6. Catalyzes the dehydration of methylthioribulose-1-phosphate (MTRu-1-P) into 2,3-diketo-5-methylthiopentyl-1-phosphate (DK-MTP-1-P). This Bacillus thuringiensis subsp. konkukian (strain 97-27) protein is Methylthioribulose-1-phosphate dehydratase.